Reading from the N-terminus, the 425-residue chain is MADKEAAFDDAVEERVINEEYKIWKKNTPFLYDLVMTHALEWPSLTAQWLPDVTRPEGKDFSIHRLVLGTHTSDEQNHLVIASVQLPNDDAQFDASHYDSEKGEFGGFGSVSGKIEIEIKINHEGEVNRARYMPQNPCIIATKTPSSDVLVFDYTKHPSKPDPSGECNPDLRLRGHQKEGYGLSWNPNLSGHLLSASDDHTICLWDISAVPKEGKVVDAKTIFTGHTAVVEDVSWHLLHESLFGSVADDQKLMIWDTRSNNTSKPSHSVDAHTAEVNCLSFNPYSEFILATGSADKTVALWDLRNLKLKLHSFESHKDEIFQVQWSPHNETILASSGTDRRLNVWDLSKIGEEQSPEDAEDGPPELLFIHGGHTAKISDFSWNPNEPWVICSVSEDNIMQVWQMAENINNDEDPEGSVDPEGQGS.

At Ala2 the chain carries N-acetylalanine. WD repeat units follow at residues 32 to 125 (YDLV…NHEG), 126 to 175 (EVNR…RLRG), 176 to 223 (HQKE…KTIF), 225 to 270 (GHTA…HSVD), 271 to 314 (AHTA…HSFE), 315 to 371 (SHKD…FIHG), and 372 to 404 (GHTAKISDFSWNPNEPWVICSVSEDNIMQVWQM). Residues 361–406 (DGPPELLFIHGGHTAKISDFSWNPNEPWVICSVSEDNIMQVWQMAE) form an interaction with HAT1 region.

It belongs to the WD repeat RBAP46/RBAP48/MSI1 family. Binds directly to histone H4, probably via helix 1 of the histone fold, a region that is not accessible when histone H4 is in chromatin. Interacts with CHAF1A, HDAC1, HDAC2, HDAC3 and HIRA. May also interact with HAT1.

Its subcellular location is the nucleus. The protein localises to the chromosome. It is found in the telomere. Functionally, core histone-binding subunit that may target chromatin assembly factors, chromatin remodeling factors and histone deacetylases to their histone substrates in a manner that is regulated by nucleosomal DNA. Component of several complexes which regulate chromatin metabolism. This Gallus gallus (Chicken) protein is Histone-binding protein RBBP4 (RBBP4).